A 339-amino-acid polypeptide reads, in one-letter code: Retinol dehydrogenase 10-A (339 aa).

A helical; Signal-anchor transmembrane segment spans residues Ile3–Phe23. Residue Val40 to Val64 participates in NADP(+) binding. Ser195 is a substrate binding site. Tyr208 functions as the Proton acceptor in the catalytic mechanism.

This sequence belongs to the short-chain dehydrogenases/reductases (SDR) family.

It localises to the microsome membrane. It is found in the endoplasmic reticulum membrane. The enzyme catalyses all-trans-retinol + NADP(+) = all-trans-retinal + NADPH + H(+). It functions in the pathway cofactor metabolism; retinol metabolism. Its function is as follows. Retinol dehydrogenase with a clear preference for NADP. Converts all-trans-retinol to all-trans-retinal. Has no detectable activity towards 11-cis-retinol, 9-cis-retinol and 13-cis-retinol. In Danio rerio (Zebrafish), this protein is Retinol dehydrogenase 10-A (rdh10a).